We begin with the raw amino-acid sequence, 463 residues long: Succinate--CoA ligase [ADP-forming] subunit beta, mitochondrial (463 aa).

The transit peptide at 1–53 (MAASVFYGRLLAVATLRNHRPRTALGAAAQVLGSSGLFNNHGLQVQQQQQRNL) directs the protein to the mitochondrion. The ATP-grasp domain occupies 61–288 (MELLQEAGVS…SNSAYRQKKI (228 aa)). An N6-acetyllysine modification is found at Lys78. Tyr84 carries the post-translational modification Phosphotyrosine. Lys88 carries the N6-acetyllysine; alternate modification. The residue at position 88 (Lys88) is an N6-succinyllysine; alternate. ATP is bound by residues Lys98 and 105–107 (GRG). 4 positions are modified to N6-acetyllysine: Lys129, Lys139, Lys143, and Lys216. Positions 258 and 272 each coordinate Mg(2+). A Phosphoserine modification is found at Ser279. Asn323 provides a ligand contact to substrate. Thr341 is subject to Phosphothreonine. N6-acetyllysine is present on Lys368. Substrate is bound at residue 380-382 (GIM).

Belongs to the succinate/malate CoA ligase beta subunit family. ATP-specific subunit beta subfamily. As to quaternary structure, heterodimer of an alpha and a beta subunit. The beta subunit determines specificity for ATP. Interacts with ALAS2. Mg(2+) serves as cofactor.

It is found in the mitochondrion. It catalyses the reaction succinate + ATP + CoA = succinyl-CoA + ADP + phosphate. The protein operates within carbohydrate metabolism; tricarboxylic acid cycle; succinate from succinyl-CoA (ligase route): step 1/1. Functionally, ATP-specific succinyl-CoA synthetase functions in the citric acid cycle (TCA), coupling the hydrolysis of succinyl-CoA to the synthesis of ATP and thus represents the only step of substrate-level phosphorylation in the TCA. The beta subunit provides nucleotide specificity of the enzyme and binds the substrate succinate, while the binding sites for coenzyme A and phosphate are found in the alpha subunit. This is Succinate--CoA ligase [ADP-forming] subunit beta, mitochondrial from Macaca fascicularis (Crab-eating macaque).